Reading from the N-terminus, the 224-residue chain is Ribosomal RNA small subunit methyltransferase G (224 aa).

S-adenosyl-L-methionine contacts are provided by residues glycine 89, leucine 94, 140-141, and arginine 154; that span reads IE.

Belongs to the methyltransferase superfamily. RNA methyltransferase RsmG family.

It localises to the cytoplasm. It catalyses the reaction guanosine(527) in 16S rRNA + S-adenosyl-L-methionine = N(7)-methylguanosine(527) in 16S rRNA + S-adenosyl-L-homocysteine. Functionally, specifically methylates the N7 position of guanine in position 527 of 16S rRNA. This Bordetella avium (strain 197N) protein is Ribosomal RNA small subunit methyltransferase G.